The primary structure comprises 99 residues: MPHYNCHSVLCASKRTRGAVGQRILHMLAQGGRIEIEKNQKKRIASVKCLTRDGWHHPGVDLDLFRKLKRKKAVSSSGGGPYRITRRGLELVRSELDNR.

This sequence belongs to the UPF0386 family.

The sequence is that of UPF0386 protein mll0189 from Mesorhizobium japonicum (strain LMG 29417 / CECT 9101 / MAFF 303099) (Mesorhizobium loti (strain MAFF 303099)).